A 430-amino-acid polypeptide reads, in one-letter code: Protein POLLENLESS 3-LIKE 2 (430 aa).

Residues 1–21 form a disordered region; the sequence is MMRDVFRPTKSAPCSPAKPLG. 6 TPR repeats span residues 40 to 73, 74 to 107, 110 to 143, 170 to 203, 205 to 236, and 238 to 257; these read DSPY…GDRV, DSAL…CSDQ, ESLD…IQKG, TRLL…APDN, KMCN…VVDG, and RGVD…LNDL. A coiled-coil region spans residues 81–107; the sequence is AIVMKQQNRAEEAIEAIKSLRVRCSDQ. A disordered region spans residues 346–376; it reads KLKRTRSSSQGMGMLSGIGGDHEGETNTSTR.

Belongs to the MS5 protein family.

The protein localises to the nucleus. Functionally, probably involved in the regulation of cell division. The chain is Protein POLLENLESS 3-LIKE 2 from Arabidopsis thaliana (Mouse-ear cress).